The chain runs to 301 residues: N-acetylmuramic acid 6-phosphate etherase (301 aa).

An SIS domain is found at 57–220 (ITEAFKKGGR…TTGAMIRSGK (164 aa)). The active-site Proton donor is the glutamate 85. Glutamate 116 is an active-site residue.

Belongs to the GCKR-like family. MurNAc-6-P etherase subfamily. Homodimer.

The catalysed reaction is N-acetyl-D-muramate 6-phosphate + H2O = N-acetyl-D-glucosamine 6-phosphate + (R)-lactate. Its pathway is amino-sugar metabolism; 1,6-anhydro-N-acetylmuramate degradation. It participates in amino-sugar metabolism; N-acetylmuramate degradation. The protein operates within cell wall biogenesis; peptidoglycan recycling. In terms of biological role, specifically catalyzes the cleavage of the D-lactyl ether substituent of MurNAc 6-phosphate, producing GlcNAc 6-phosphate and D-lactate. Together with AnmK, is also required for the utilization of anhydro-N-acetylmuramic acid (anhMurNAc) either imported from the medium or derived from its own cell wall murein, and thus plays a role in cell wall recycling. The chain is N-acetylmuramic acid 6-phosphate etherase from Photobacterium profundum (strain SS9).